A 261-amino-acid polypeptide reads, in one-letter code: Kallikrein-1 (261 aa).

Residues 1-18 form the signal peptide; sequence MRFLILFLALSLGGIDAA. A propeptide spans 19-24 (activation peptide); that stretch reads PPVQSR. The Peptidase S1 domain maps to 25–258; the sequence is IVGGFNCEKN…FNTWIRETMA (234 aa). Disulfide bonds link C31-C173, C50-C66, C152-C219, C184-C198, and C209-C234. Residue H65 is the Charge relay system of the active site. Residue N102 is glycosylated (N-linked (GlcNAc...) asparagine). Catalysis depends on D120, which acts as the Charge relay system. Residue S213 is the Charge relay system of the active site.

Belongs to the peptidase S1 family. Kallikrein subfamily.

The catalysed reaction is Preferential cleavage of Arg-|-Xaa bonds in small molecule substrates. Highly selective action to release kallidin (lysyl-bradykinin) from kininogen involves hydrolysis of Met-|-Xaa or Leu-|-Xaa.. In terms of biological role, glandular kallikreins cleave Met-Lys and Arg-Ser bonds in kininogen to release Lys-bradykinin. This Mus musculus (Mouse) protein is Kallikrein-1 (Klk1).